The chain runs to 263 residues: Insulin-like growth factor-binding protein 1 (263 aa).

The N-terminal stretch at 1–25 (MPEVLAVRAWPLLLSLAVQLGATVG) is a signal peptide. The IGFBP N-terminal domain occupies 28–109 (QPWRCAPCSA…TRGQGACMTT (82 aa)). 6 disulfides stabilise this stretch: Cys-32/Cys-59, Cys-35/Cys-61, Cys-43/Cys-62, Cys-50/Cys-65, Cys-73/Cys-86, and Cys-80/Cys-106. The segment at 102-131 (GQGACMTTPSDEATDTKDTTSPENVSPESS) is disordered. Ser-122, Ser-127, Ser-130, Ser-148, and Ser-160 each carry phosphoserine. The segment covering 122–131 (SPENVSPESS) has biased composition (polar residues). A Phosphotyrosine modification is found at Tyr-162. One can recognise a Thyroglobulin type-1 domain in the interval 177 to 255 (KEPCQRELYK…SVAVRGDPKC (79 aa)). 3 cysteine pairs are disulfide-bonded: Cys-180-Cys-210, Cys-221-Cys-232, and Cys-234-Cys-255. Ser-246 is modified (phosphoserine). Residues 250–252 (RGD) carry the Cell attachment site motif.

As to quaternary structure, binds equally well IGF1 and IGF2. Interacts with integrin ITGA5:ITGB1. Interacts with VHL; this interaction inhibits HIF1A degradation.

The protein localises to the secreted. Multifunctional protein that plays a critical role in regulating the availability of IGFs such as IGF1 and IGF2 to their receptors and thereby regulates IGF-mediated cellular processes including cell migration, proliferation, differentiation or apoptosis in a cell-type specific manner. Also plays a positive role in cell migration by interacting with integrin ITGA5:ITGB1 through its RGD motif. Mechanistically, binding to integrins leads to activation of focal adhesion kinase/PTK2 and stimulation of the mitogen-activated protein kinase (MAPK) pathway. Regulates cardiomyocyte apoptosis by suppressing HIF-1alpha/HIF1A degradation through ubiquitination. The sequence is that of Insulin-like growth factor-binding protein 1 (IGFBP1) from Bos taurus (Bovine).